The chain runs to 329 residues: Biotin synthase (329 aa).

The region spanning 48-278 (FVGDKVFLCS…TKRISICGGR (231 aa)) is the Radical SAM core domain. The [4Fe-4S] cluster site is built by C66, C70, and C73. S143 and C203 together coordinate [2Fe-2S] cluster.

The protein belongs to the radical SAM superfamily. Biotin synthase family. In terms of assembly, homodimer. It depends on [4Fe-4S] cluster as a cofactor. The cofactor is [2Fe-2S] cluster.

It catalyses the reaction (4R,5S)-dethiobiotin + (sulfur carrier)-SH + 2 reduced [2Fe-2S]-[ferredoxin] + 2 S-adenosyl-L-methionine = (sulfur carrier)-H + biotin + 2 5'-deoxyadenosine + 2 L-methionine + 2 oxidized [2Fe-2S]-[ferredoxin]. The protein operates within cofactor biosynthesis; biotin biosynthesis; biotin from 7,8-diaminononanoate: step 2/2. Functionally, catalyzes the conversion of dethiobiotin (DTB) to biotin by the insertion of a sulfur atom into dethiobiotin via a radical-based mechanism. The protein is Biotin synthase of Geotalea daltonii (strain DSM 22248 / JCM 15807 / FRC-32) (Geobacter daltonii).